The primary structure comprises 279 residues: 3-methyl-2-oxobutanoate hydroxymethyltransferase (279 aa).

Residues Asp-44 and Asp-83 each coordinate Mg(2+). 3-methyl-2-oxobutanoate contacts are provided by residues 44-45 (DS), Asp-83, and Lys-113. Glu-115 lines the Mg(2+) pocket. The active-site Proton acceptor is Glu-182.

This sequence belongs to the PanB family. As to quaternary structure, homodecamer; pentamer of dimers. The cofactor is Mg(2+).

The protein resides in the cytoplasm. The enzyme catalyses 3-methyl-2-oxobutanoate + (6R)-5,10-methylene-5,6,7,8-tetrahydrofolate + H2O = 2-dehydropantoate + (6S)-5,6,7,8-tetrahydrofolate. Its pathway is cofactor biosynthesis; (R)-pantothenate biosynthesis; (R)-pantoate from 3-methyl-2-oxobutanoate: step 1/2. Its function is as follows. Catalyzes the reversible reaction in which hydroxymethyl group from 5,10-methylenetetrahydrofolate is transferred onto alpha-ketoisovalerate to form ketopantoate. This chain is 3-methyl-2-oxobutanoate hydroxymethyltransferase, found in Desulfotalea psychrophila (strain LSv54 / DSM 12343).